Here is a 314-residue protein sequence, read N- to C-terminus: DNA-directed RNA polymerase subunit alpha (314 aa).

The segment at 1 to 227 (MTKFEIECVE…ELLHPLKEIN (227 aa)) is alpha N-terminal domain (alpha-NTD). The alpha C-terminal domain (alpha-CTD) stretch occupies residues 241-314 (KINQILIEEL…LPKEKTVKPN (74 aa)).

The protein belongs to the RNA polymerase alpha chain family. In terms of assembly, in plastids the minimal PEP RNA polymerase catalytic core is composed of four subunits: alpha, beta, beta', and beta''. When a (nuclear-encoded) sigma factor is associated with the core the holoenzyme is formed, which can initiate transcription.

The protein resides in the plastid. Its subcellular location is the chloroplast. It carries out the reaction RNA(n) + a ribonucleoside 5'-triphosphate = RNA(n+1) + diphosphate. In terms of biological role, DNA-dependent RNA polymerase catalyzes the transcription of DNA into RNA using the four ribonucleoside triphosphates as substrates. In Rhodomonas salina (Cryptomonas salina), this protein is DNA-directed RNA polymerase subunit alpha.